The chain runs to 434 residues: MESKSFSKPTRTATVIVGTQFGDEGKGKLVDYLSDKYDIVVRYQGGANAGHTICFDNKSVVLHLIPSGIFHEGCVCVIGNGVVIDPVALLEEIKKVEELGYDVKGRLFISHNAHLIMPYHKRLDSLHEDAQGEQKIGTTGRGIGPSYEDKFARKGIRVVDLLSPDVLQEKLRENLAAKNKLFRNIYEKEEFDVEELVRDYSEFDKIIDPYVTNTQLYLSRQLKAGKTVLLEGAQGCLLDVDHGTYPYVTSSNPTSGGACTGSGIAPNYVGKVIGVVKAYMTRVGNGAFPSELFDETGESLCRIGHEFGATTGRKRRCGWIDLVALRYSLTVNGVTEIALTKLDVLDTFEEVKVCTSYMLDGKEIHDFPTDHPTLSRVTPVYKTLKGWMSSNAHARTLDDMCPEARSYVTFLEDELQVPVTFVSVGPGREETVYR.

Residues 22-28 and 50-52 each bind GTP; these read GDEGKGK and GHT. D23 (proton acceptor) is an active-site residue. Residues D23 and G50 each coordinate Mg(2+). Residues 23-26, 48-51, T139, R153, Q234, T249, and R313 contribute to the IMP site; these read DEGK and NAGH. The active-site Proton donor is H51. 309–315 lines the substrate pocket; the sequence is ATTGRKR. Residues R315, 341-343, and 423-425 each bind GTP; these read KLD and SVG.

This sequence belongs to the adenylosuccinate synthetase family. As to quaternary structure, homodimer. Mg(2+) is required as a cofactor.

It is found in the cytoplasm. It carries out the reaction IMP + L-aspartate + GTP = N(6)-(1,2-dicarboxyethyl)-AMP + GDP + phosphate + 2 H(+). The protein operates within purine metabolism; AMP biosynthesis via de novo pathway; AMP from IMP: step 1/2. Its function is as follows. Plays an important role in the de novo pathway of purine nucleotide biosynthesis. Catalyzes the first committed step in the biosynthesis of AMP from IMP. In Chlorobium limicola (strain DSM 245 / NBRC 103803 / 6330), this protein is Adenylosuccinate synthetase.